We begin with the raw amino-acid sequence, 373 residues long: Septin homolog spn3 (373 aa).

Residues 10–286 (KGIPLNLMVV…ETYRTEKLST (277 aa)) enclose the Septin-type G domain. Residues 20–27 (GDVGLGRT) are G1 motif. Residue 20-27 (GDVGLGRT) participates in GTP binding. A G3 motif region spans residues 79–82 (DTPH). A G4 motif region spans residues 161-164 (AKAD). GTP contacts are provided by residues 162 to 170 (KADSLTAQE) and Arg235. Ser303 carries the post-translational modification Phosphoserine. Residues 311 to 357 (EDRLRAIELSVQKEIEEKRRQLLAREEALRALEEKLAASTAAMANAS) are a coiled coil.

It belongs to the TRAFAC class TrmE-Era-EngA-EngB-Septin-like GTPase superfamily. Septin GTPase family. In terms of assembly, component of the septin complex composed of two copies of each spn1, spn2, spn3 and spn4.

It localises to the cytoplasm. The protein localises to the cell cortex. Its function is as follows. Plays a role in the cell cycle. Involved in a late stage of septum formation leading to the separation of the daughter cells. In Schizosaccharomyces pombe (strain 972 / ATCC 24843) (Fission yeast), this protein is Septin homolog spn3 (spn3).